The chain runs to 198 residues: Ribonuclease 3-like protein 1 (198 aa).

Residues 85–110 show a composition bias toward basic and acidic residues; sequence KKLAPKPDEEHTTTTKPISKDDESKT. The segment at 85 to 115 is disordered; that stretch reads KKLAPKPDEEHTTTTKPISKDDESKTRRGSA. In terms of domain architecture, DRBM spans 114 to 191; sequence SAKSVLHEMC…AEGALWYLEH (78 aa).

The protein is Ribonuclease 3-like protein 1 (RTL1) of Arabidopsis thaliana (Mouse-ear cress).